The primary structure comprises 597 residues: Leukocyte immunoglobulin-like receptor subfamily B member 2 (597 aa).

The signal sequence occupies residues 1–21 (MTPIVTVLICLGLSLGPRTRV). At 22–460 (QTGTIPKPTL…QSGLGRHLGV (439 aa)) the chain is on the extracellular side. Ig-like C2-type domains are found at residues 27–110 (PKPT…SELS), 111–229 (DPLV…SLSV), 230–318 (QPGP…ILIT), and 330–419 (QPGP…LVVS). 4 cysteine pairs are disulfide-bonded: cysteine 49–cysteine 98, cysteine 144–cysteine 196, cysteine 156–cysteine 166, and cysteine 245–cysteine 296. Asparagine 280, asparagine 301, and asparagine 340 each carry an N-linked (GlcNAc...) asparagine glycan. Cysteine 345 and cysteine 396 form a disulfide bridge. The interval 417–451 (VVSGPSMGSSPPPTGPISTPGPEDQPLTPTGSDPQ) is disordered. The helical transmembrane segment at 461–481 (VIGILVAVVLLLLLLLLLFLI) threads the bilayer. Topologically, residues 482 to 597 (LRHRRQGKHW…PSIYATLAIH (116 aa)) are cytoplasmic. Positions 491-523 (WTSTQRKADFQHPAGAVGPEPTDRGLQWRSSPA) are disordered. Short sequence motifs (ITIM motif) lie at residues 530–535 (NLYAAV), 559–564 (VTYAQL), and 589–594 (SIYATL). Positions 537–597 (DTQPEDGVEM…PSIYATLAIH (61 aa)) are disordered.

As to quaternary structure, binds PTPN6 when phosphorylated. Binds FCGR1A. Interacts with peptide-bound HLA-G-B2M; this interaction is direct. Interacts with peptide-bound HLA-F-B2M; this interaction is direct. Post-translationally, phosphorylated on tyrosine residues. Dephosphorylated by PTPN6. In terms of tissue distribution, expressed in monocytes and at lower levels in myeloid and plasmacytoid dendritic cells. Expressed in tolerogenic IL10-producing dendritic cells. Expressed in myeloid-derived suppressor cells during pregnancy. Detected at low levels in natural killer (NK) cells. Expressed in B cells.

It is found in the cell membrane. Its function is as follows. Receptor for class I MHC antigens. Recognizes a broad spectrum of HLA-A, HLA-B, HLA-C, HLA-G and HLA-F alleles. Involved in the down-regulation of the immune response and the development of tolerance. Recognizes HLA-G in complex with B2M/beta-2 microglobulin and a nonamer self-peptide (peptide-bound HLA-G-B2M) triggering differentiation of type 1 regulatory T cells and myeloid-derived suppressor cells, both of which actively maintain maternal-fetal tolerance. Competes with CD8A for binding to class I MHC antigens. Inhibits FCGR1A-mediated phosphorylation of cellular proteins and mobilization of intracellular calcium ions. The chain is Leukocyte immunoglobulin-like receptor subfamily B member 2 from Homo sapiens (Human).